The primary structure comprises 430 residues: tRNA(Ile)-lysidine synthase (430 aa).

ATP is bound at residue 21 to 26 (SGGLDS).

This sequence belongs to the tRNA(Ile)-lysidine synthase family.

It localises to the cytoplasm. It carries out the reaction cytidine(34) in tRNA(Ile2) + L-lysine + ATP = lysidine(34) in tRNA(Ile2) + AMP + diphosphate + H(+). In terms of biological role, ligates lysine onto the cytidine present at position 34 of the AUA codon-specific tRNA(Ile) that contains the anticodon CAU, in an ATP-dependent manner. Cytidine is converted to lysidine, thus changing the amino acid specificity of the tRNA from methionine to isoleucine. The chain is tRNA(Ile)-lysidine synthase from Salmonella schwarzengrund (strain CVM19633).